The sequence spans 427 residues: Enolase (427 aa).

Position 163 (glutamine 163) interacts with (2R)-2-phosphoglycerate. Glutamate 205 acts as the Proton donor in catalysis. Residues aspartate 242, glutamate 285, and aspartate 312 each coordinate Mg(2+). (2R)-2-phosphoglycerate is bound by residues lysine 337, arginine 366, serine 367, and lysine 388. The active-site Proton acceptor is lysine 337.

The protein belongs to the enolase family. Mg(2+) is required as a cofactor.

It is found in the cytoplasm. The protein localises to the secreted. Its subcellular location is the cell surface. It catalyses the reaction (2R)-2-phosphoglycerate = phosphoenolpyruvate + H2O. Its pathway is carbohydrate degradation; glycolysis; pyruvate from D-glyceraldehyde 3-phosphate: step 4/5. In terms of biological role, catalyzes the reversible conversion of 2-phosphoglycerate (2-PG) into phosphoenolpyruvate (PEP). It is essential for the degradation of carbohydrates via glycolysis. In Paraburkholderia phymatum (strain DSM 17167 / CIP 108236 / LMG 21445 / STM815) (Burkholderia phymatum), this protein is Enolase.